A 408-amino-acid chain; its full sequence is Cytochrome P450 55A3 (408 aa).

Residue cysteine 357 coordinates heme.

Belongs to the cytochrome P450 family. Heme serves as cofactor.

The protein is Cytochrome P450 55A3 (CYP55A3) of Fusarium lichenicola (Cylindrocarpon lichenicola).